The sequence spans 486 residues: Secreted protein C (486 aa).

The first 22 residues, 1–22, serve as a signal peptide directing secretion; the sequence is MKINIILLFVGLILAFAVLSNA. Residues 30–332 form a disordered region; sequence GVNPFDNNNS…SGSHGGSSSH (303 aa). Residue Asn-37 is glycosylated (N-linked (GlcNAc...) asparagine). The segment covering 41–60 has biased composition (gly residues); that stretch reads SGSGSGSGGGSSSSGSGTGQ. Residues 61–318 show a composition bias toward low complexity; it reads SSGTVSSSGS…TGSSEYSSSS (258 aa). 7 N-linked (GlcNAc...) asparagine glycosylation sites follow: Asn-73, Asn-74, Asn-83, Asn-112, Asn-129, Asn-149, and Asn-174.

This sequence belongs to the Sct family.

Its subcellular location is the secreted. The protein is Secreted protein C of Dictyostelium discoideum (Social amoeba).